Consider the following 438-residue polypeptide: Protein translocase subunit SecY (438 aa).

The chain crosses the membrane as a helical span at residues 1–43; it reads MKIKPILELIPEVKRPLKGVSFKEKIQWTGLVLILYFILGTID. At 44–54 the chain is on the extracellular side; the sequence is IYMGGAEMPAM. The helical intramembrane region spans 55–62; sequence FAFWQTVT. Residues 55-83 traverse the membrane as a discontinuously helical segment; that stretch reads FAFWQTVTASKMGTLITLGIGPIVTAGII. An intramembrane segment occupies 63-74; sequence ASKMGTLITLGI. Positions 75–83 form an intramembrane region, helical; the sequence is GPIVTAGII. The Cytoplasmic portion of the chain corresponds to 84 to 104; that stretch reads MQLLVGSELISLDLSKPMNRA. Residues 105–129 form a helical membrane-spanning segment; the sequence is LFQGLQKLFGIFLCFLEAVMFVGAG. Residues 130–136 are Extracellular-facing; it reads AFGVVNS. Residues 137 to 161 form a helical membrane-spanning segment; sequence TLALILVLQLALGAILVIYLDEIVS. At 162-167 the chain is on the cytoplasmic side; it reads RYGIGS. A helical membrane pass occupies residues 168 to 186; sequence GIGLFIAAGVAQTIFVGAF. At 187 to 209 the chain is on the extracellular side; the sequence is GAEGYLWKFFSAMSVGSLGIAFE. Residues 210–231 traverse the membrane as a helical segment; that stretch reads YILPILSTLFVFLVVVYVESIR. At 232-256 the chain is on the cytoplasmic side; the sequence is VEIPLAHGRVKGAVGKYPIKFIYVS. The helical transmembrane segment at 257–278 threads the bilayer; the sequence is NLPVILAAALFANIQLWGMFLD. At 279–315 the chain is on the extracellular side; it reads RMGYPILGQYSNGTAVSGIAYYFSTPYGISNIISDPL. The helical transmembrane segment at 316–335 threads the bilayer; that stretch reads HAIFYTLMMVIFCILFGLFW. Topologically, residues 336–378 are cytoplasmic; sequence VETSGLDAKSMAKKLGNLDMAIKGFRKSQKSIEQRLKRYIKPI. The helical transmembrane segment at 379–397 threads the bilayer; it reads TVMGSAFVGFLAAAADFTG. The Extracellular segment spans residues 398–400; the sequence is ALG. Residues 401-415 traverse the membrane as a helical segment; the sequence is GGTGVLLTVSIVYRL. Residues 416–438 lie on the Cytoplasmic side of the membrane; sequence YEQLVQEQLSELHPAVAKFVGKR.

It belongs to the SecY/SEC61-alpha family. As to quaternary structure, component of the Sec protein translocase complex. Heterotrimer consisting of alpha (SecY), beta (SecG) and gamma (SecE) subunits. The heterotrimers can form oligomers, although 1 heterotrimer is thought to be able to translocate proteins. Interacts with the ribosome. May interact with SecDF, and other proteins may be involved.

It localises to the cell membrane. Its function is as follows. The central subunit of the protein translocation channel SecYEG. Consists of two halves formed by TMs 1-5 and 6-10. These two domains form a lateral gate at the front which open onto the bilayer between TMs 2 and 7, and are clamped together by SecE at the back. The channel is closed by both a pore ring composed of hydrophobic SecY resides and a short helix (helix 2A) on the extracellular side of the membrane which forms a plug. The plug probably moves laterally to allow the channel to open. The ring and the pore may move independently. In Methanococcus vannielii, this protein is Protein translocase subunit SecY.